A 394-amino-acid polypeptide reads, in one-letter code: Flavohemoprotein (394 aa).

The Globin domain occupies M1–E136. H85 lines the heme b pocket. Active-site charge relay system residues include Y95 and E135. A reductase region spans residues G147–V394. One can recognise an FAD-binding FR-type domain in the interval R150–D255. Residues Y188 and R204–S207 each bind FAD. G268–P273 lines the NADP(+) pocket. Residue C387–P390 coordinates FAD.

Belongs to the globin family. Two-domain flavohemoproteins subfamily. It in the C-terminal section; belongs to the flavoprotein pyridine nucleotide cytochrome reductase family. Heme b serves as cofactor. It depends on FAD as a cofactor.

It carries out the reaction 2 nitric oxide + NADPH + 2 O2 = 2 nitrate + NADP(+) + H(+). The catalysed reaction is 2 nitric oxide + NADH + 2 O2 = 2 nitrate + NAD(+) + H(+). In terms of biological role, is involved in NO detoxification in an aerobic process, termed nitric oxide dioxygenase (NOD) reaction that utilizes O(2) and NAD(P)H to convert NO to nitrate, which protects the bacterium from various noxious nitrogen compounds. Therefore, plays a central role in the inducible response to nitrosative stress. The protein is Flavohemoprotein of Vibrio vulnificus (strain YJ016).